The sequence spans 159 residues: 6,7-dimethyl-8-ribityllumazine synthase (159 aa).

5-amino-6-(D-ribitylamino)uracil contacts are provided by residues Trp28, 59–61 (ALE), and 81–83 (CVI). Residue 86–87 (GT) coordinates (2S)-2-hydroxy-3-oxobutyl phosphate. The Proton donor role is filled by His89. Asn114 serves as a coordination point for 5-amino-6-(D-ribitylamino)uracil. Arg128 contacts (2S)-2-hydroxy-3-oxobutyl phosphate.

The protein belongs to the DMRL synthase family.

It catalyses the reaction (2S)-2-hydroxy-3-oxobutyl phosphate + 5-amino-6-(D-ribitylamino)uracil = 6,7-dimethyl-8-(1-D-ribityl)lumazine + phosphate + 2 H2O + H(+). It participates in cofactor biosynthesis; riboflavin biosynthesis; riboflavin from 2-hydroxy-3-oxobutyl phosphate and 5-amino-6-(D-ribitylamino)uracil: step 1/2. Its function is as follows. Catalyzes the formation of 6,7-dimethyl-8-ribityllumazine by condensation of 5-amino-6-(D-ribitylamino)uracil with 3,4-dihydroxy-2-butanone 4-phosphate. This is the penultimate step in the biosynthesis of riboflavin. The chain is 6,7-dimethyl-8-ribityllumazine synthase from Corynebacterium kroppenstedtii (strain DSM 44385 / JCM 11950 / CIP 105744 / CCUG 35717).